The following is a 212-amino-acid chain: Outer-membrane lipoprotein carrier protein (212 aa).

A signal peptide spans 1-29; that stretch reads MSSARRRALGFSFQALLLCAAGWHGAAQA.

It belongs to the LolA family. Monomer.

It is found in the periplasm. In terms of biological role, participates in the translocation of lipoproteins from the inner membrane to the outer membrane. Only forms a complex with a lipoprotein if the residue after the N-terminal Cys is not an aspartate (The Asp acts as a targeting signal to indicate that the lipoprotein should stay in the inner membrane). The polypeptide is Outer-membrane lipoprotein carrier protein (Leptothrix cholodnii (strain ATCC 51168 / LMG 8142 / SP-6) (Leptothrix discophora (strain SP-6))).